The sequence spans 342 residues: NAD kinase (342 aa).

Asp-66 serves as the catalytic Proton acceptor. Residues 66-67 (DG), Arg-71, 141-142 (ND), Lys-152, Asp-171, 182-187 (TAYAFS), and Ala-206 each bind NAD(+).

The protein belongs to the NAD kinase family. The cofactor is a divalent metal cation.

The protein resides in the cytoplasm. It carries out the reaction NAD(+) + ATP = ADP + NADP(+) + H(+). Its function is as follows. Involved in the regulation of the intracellular balance of NAD and NADP, and is a key enzyme in the biosynthesis of NADP. Catalyzes specifically the phosphorylation on 2'-hydroxyl of the adenosine moiety of NAD to yield NADP. In Bifidobacterium longum (strain NCC 2705), this protein is NAD kinase.